The primary structure comprises 186 residues: ATP synthase subunit delta (186 aa).

This sequence belongs to the ATPase delta chain family. As to quaternary structure, F-type ATPases have 2 components, F(1) - the catalytic core - and F(0) - the membrane proton channel. F(1) has five subunits: alpha(3), beta(3), gamma(1), delta(1), epsilon(1). CF(0) has four main subunits: a(1), b(1), b'(1) and c(10-14). The alpha and beta chains form an alternating ring which encloses part of the gamma chain. F(1) is attached to F(0) by a central stalk formed by the gamma and epsilon chains, while a peripheral stalk is formed by the delta, b and b' chains.

It is found in the cell inner membrane. Functionally, f(1)F(0) ATP synthase produces ATP from ADP in the presence of a proton or sodium gradient. F-type ATPases consist of two structural domains, F(1) containing the extramembraneous catalytic core and F(0) containing the membrane proton channel, linked together by a central stalk and a peripheral stalk. During catalysis, ATP synthesis in the catalytic domain of F(1) is coupled via a rotary mechanism of the central stalk subunits to proton translocation. This protein is part of the stalk that links CF(0) to CF(1). It either transmits conformational changes from CF(0) to CF(1) or is implicated in proton conduction. This chain is ATP synthase subunit delta, found in Bradyrhizobium sp. (strain BTAi1 / ATCC BAA-1182).